Here is a 188-residue protein sequence, read N- to C-terminus: UPF0200 protein YG5714_1176 (188 aa).

15–22 (GMPGSGKS) is an ATP binding site.

The protein belongs to the UPF0200 family.

This Saccharolobus islandicus (strain Y.G.57.14 / Yellowstone #1) (Sulfolobus islandicus) protein is UPF0200 protein YG5714_1176.